Reading from the N-terminus, the 169-residue chain is NADH-quinone oxidoreductase subunit I (169 aa).

2 4Fe-4S ferredoxin-type domains span residues R61 to E90 and T100 to I129. Positions 70, 73, 76, 80, 109, 112, 115, and 119 each coordinate [4Fe-4S] cluster.

The protein belongs to the complex I 23 kDa subunit family. In terms of assembly, NDH-1 is composed of 14 different subunits. Subunits NuoA, H, J, K, L, M, N constitute the membrane sector of the complex. The cofactor is [4Fe-4S] cluster.

The protein resides in the cell inner membrane. The catalysed reaction is a quinone + NADH + 5 H(+)(in) = a quinol + NAD(+) + 4 H(+)(out). NDH-1 shuttles electrons from NADH, via FMN and iron-sulfur (Fe-S) centers, to quinones in the respiratory chain. The immediate electron acceptor for the enzyme in this species is believed to be ubiquinone. Couples the redox reaction to proton translocation (for every two electrons transferred, four hydrogen ions are translocated across the cytoplasmic membrane), and thus conserves the redox energy in a proton gradient. The polypeptide is NADH-quinone oxidoreductase subunit I (Verminephrobacter eiseniae (strain EF01-2)).